Consider the following 345-residue polypeptide: Uroporphyrinogen decarboxylase (345 aa).

Substrate is bound by residues 28–32 (RQAGR), Asp-77, Tyr-152, Ser-207, and His-321.

This sequence belongs to the uroporphyrinogen decarboxylase family. In terms of assembly, homodimer.

It localises to the cytoplasm. The catalysed reaction is uroporphyrinogen III + 4 H(+) = coproporphyrinogen III + 4 CO2. It functions in the pathway porphyrin-containing compound metabolism; protoporphyrin-IX biosynthesis; coproporphyrinogen-III from 5-aminolevulinate: step 4/4. In terms of biological role, catalyzes the decarboxylation of four acetate groups of uroporphyrinogen-III to yield coproporphyrinogen-III. In Arthrobacter sp. (strain FB24), this protein is Uroporphyrinogen decarboxylase.